The sequence spans 423 residues: UDP-N-acetylglucosamine 1-carboxyvinyltransferase (423 aa).

22–23 (KN) provides a ligand contact to phosphoenolpyruvate. UDP-N-acetyl-alpha-D-glucosamine is bound at residue arginine 98. Residue cysteine 122 is the Proton donor of the active site. Cysteine 122 is subject to 2-(S-cysteinyl)pyruvic acid O-phosphothioketal. Residues 127–131 (RPVDQ), aspartate 311, and isoleucine 333 contribute to the UDP-N-acetyl-alpha-D-glucosamine site.

The protein belongs to the EPSP synthase family. MurA subfamily.

The protein resides in the cytoplasm. The enzyme catalyses phosphoenolpyruvate + UDP-N-acetyl-alpha-D-glucosamine = UDP-N-acetyl-3-O-(1-carboxyvinyl)-alpha-D-glucosamine + phosphate. Its pathway is cell wall biogenesis; peptidoglycan biosynthesis. In terms of biological role, cell wall formation. Adds enolpyruvyl to UDP-N-acetylglucosamine. In Stenotrophomonas maltophilia (strain R551-3), this protein is UDP-N-acetylglucosamine 1-carboxyvinyltransferase.